The chain runs to 505 residues: ATP synthase subunit alpha (505 aa).

169–176 (GDRQTGKT) contacts ATP.

Belongs to the ATPase alpha/beta chains family. F-type ATPases have 2 components, CF(1) - the catalytic core - and CF(0) - the membrane proton channel. CF(1) has five subunits: alpha(3), beta(3), gamma(1), delta(1), epsilon(1). CF(0) has three main subunits: a(1), b(2) and c(9-12). The alpha and beta chains form an alternating ring which encloses part of the gamma chain. CF(1) is attached to CF(0) by a central stalk formed by the gamma and epsilon chains, while a peripheral stalk is formed by the delta and b chains.

Its subcellular location is the cell membrane. It carries out the reaction ATP + H2O + 4 H(+)(in) = ADP + phosphate + 5 H(+)(out). In terms of biological role, produces ATP from ADP in the presence of a proton gradient across the membrane. The alpha chain is a regulatory subunit. This Alkaliphilus metalliredigens (strain QYMF) protein is ATP synthase subunit alpha.